Here is an 871-residue protein sequence, read N- to C-terminus: Alanine--tRNA ligase (871 aa).

Residues His-561, His-565, Cys-662, and His-666 each coordinate Zn(2+).

This sequence belongs to the class-II aminoacyl-tRNA synthetase family. Requires Zn(2+) as cofactor.

The protein localises to the cytoplasm. It carries out the reaction tRNA(Ala) + L-alanine + ATP = L-alanyl-tRNA(Ala) + AMP + diphosphate. Its function is as follows. Catalyzes the attachment of alanine to tRNA(Ala) in a two-step reaction: alanine is first activated by ATP to form Ala-AMP and then transferred to the acceptor end of tRNA(Ala). Also edits incorrectly charged Ser-tRNA(Ala) and Gly-tRNA(Ala) via its editing domain. This Dechloromonas aromatica (strain RCB) protein is Alanine--tRNA ligase.